We begin with the raw amino-acid sequence, 138 residues long: Drosulfakinins (138 aa).

Residues 1–33 form the signal peptide; sequence MGLRSCTHFATLVMPLWALAFCFLVLVPVPAQT. A propeptide spanning residues 34–73 is cleaved from the precursor; the sequence is TSLQISKGDRRLQDLESNMGAESDQPNANLVGTSLSRFGD. Phenylalanine 82 carries the phenylalanine amide modification. A propeptide spanning residues 86 to 108 is cleaved from the precursor; sequence VPRPIIPIELDLLMDNDDENTKA. Tyrosine 114 is subject to Sulfotyrosine. Phenylalanine 119 is subject to Phenylalanine amide. Tyrosine 131 is modified (sulfotyrosine). Phenylalanine amide is present on phenylalanine 136.

This sequence belongs to the gastrin/cholecystokinin family.

The protein resides in the secreted. Functionally, drosulfakinin-0 (DSK 0) plays diverse biological roles including regulating gut muscle contraction in adults but not in larvae. The sequence is that of Drosulfakinins from Drosophila teissieri (Fruit fly).